The chain runs to 82 residues: Exodeoxyribonuclease 7 small subunit (82 aa).

It belongs to the XseB family. Heterooligomer composed of large and small subunits.

The protein localises to the cytoplasm. The catalysed reaction is Exonucleolytic cleavage in either 5'- to 3'- or 3'- to 5'-direction to yield nucleoside 5'-phosphates.. Bidirectionally degrades single-stranded DNA into large acid-insoluble oligonucleotides, which are then degraded further into small acid-soluble oligonucleotides. This Coxiella burnetii (strain CbuG_Q212) (Coxiella burnetii (strain Q212)) protein is Exodeoxyribonuclease 7 small subunit.